The chain runs to 156 residues: Small ribosomal subunit protein uS7 (156 aa).

It belongs to the universal ribosomal protein uS7 family. In terms of assembly, part of the 30S ribosomal subunit. Contacts proteins S9 and S11.

In terms of biological role, one of the primary rRNA binding proteins, it binds directly to 16S rRNA where it nucleates assembly of the head domain of the 30S subunit. Is located at the subunit interface close to the decoding center, probably blocks exit of the E-site tRNA. This Syntrophotalea carbinolica (strain DSM 2380 / NBRC 103641 / GraBd1) (Pelobacter carbinolicus) protein is Small ribosomal subunit protein uS7.